Here is a 403-residue protein sequence, read N- to C-terminus: F-box/LRR-repeat protein At1g06630 (403 aa).

An F-box domain is found at 11 to 59; that stretch reads RDAINWLPDEILGKILSLLATKQAVSTSVLSKKWRTLFKLVDTLEFDDS. LRR repeat units lie at residues 239–262 and 288–312; these read LPNL…NLES and IRNV…KYGL.

The chain is F-box/LRR-repeat protein At1g06630 from Arabidopsis thaliana (Mouse-ear cress).